The sequence spans 351 residues: Calcium uniporter protein, mitochondrial (351 aa).

Residues 1–50 (MAAAAGRSLLLLLSSRGGGGGGAGGCGALTAGCFPGLGVSRHRQQQHHRT) constitute a mitochondrion transit peptide. At 51–233 (VHQRIASWQN…ISRKAEKRTT (183 aa)) the chain is on the mitochondrial matrix side. Phosphoserine; by CaMK2 occurs at positions 57 and 92. The interval 75–165 (VTVVYQNGLP…LTYHVRPPKR (91 aa)) is N-terminal MCU domain. Position 97 is an S-glutathionyl cysteine (Cys97). A coiled-coil region spans residues 192–223 (IEQHQLNKERELIERLEDLKEQLAPLEKVRIE). The chain crosses the membrane as a helical span at residues 234-255 (LVLWGGLAYMATQFGILARLTW). Residues 256 to 262 (WEYSWDI) are Mitochondrial intermembrane-facing. The Selectivity filter motif lies at 260–268 (WDIMEPVTY). A helical transmembrane segment spans residues 263–284 (MEPVTYFITYGSAMAMYAYFVM). Glu264 lines the Ca(2+) pocket. The segment at 285–290 (TRQEYV) is juxtamembrane helix. The Mitochondrial matrix portion of the chain corresponds to 285 to 351 (TRQEYVYPEA…LPLRQIGEKD (67 aa)). The stretch at 311–339 (RFDLEKYNQLKDAIAQAEMDLKRLRDPLQ) forms a coiled coil. N6-acetyllysine is present on Lys332.

It belongs to the MCU (TC 1.A.77) family. As to quaternary structure, homotetramer. Component of the uniplex complex, composed of MCU, EMRE/SMDT1, MICU1 and MICU2 (or MICU3) in a 4:4:1:1 stoichiometry. Interacts with CCDC109B/MCUB; this inhibits channel activity. Interacts with MCUR1. Interactions with MICU1 and MCUR1 are mutually exclusive. Interacts with SLC25A23. Phosphorylation by CaMK2 in heart leads to increased MCU current. The regulation of MCU by CaMK2 is however subject to discussion: another group was unable to reproduce these results. Phosphorylated on tyrosines by PTK2B/PYK2, promoting oligomerization. In terms of processing, glutathionylation at Cys-97 in response to reactive oxygen species (ROS) promotes MCU higher-order assembly, leading to constitutive activation of the MCU channel and mitochondrial calcium overload. Post-translationally, undergoes proteolytic degradation by SPG7.

It is found in the mitochondrion inner membrane. It carries out the reaction Ca(2+)(in) = Ca(2+)(out). Its activity is regulated as follows. MCU channel activity is regulated by the heterodimer composed of MICU1 and either MICU2 or MICU3, which act as calcium-sensors. At low calcium levels, MICU1 occludes the pore of the MCU channel, preventing mitochondrial calcium uptake. At higher calcium levels, calcium-binding to MICU1 and MICU2 (or MICU3) induces a conformational change that weakens MCU-MICU1 interactions and moves the MICU1-MICU2 heterodimer away from the pore, allowing calcium permeation through the channel. MCU channel activity is gated by EMRE/SMDT1 via the juxtamembrane helix loop. Inhibited by ruthenium red or its derivative Ru360. In terms of biological role, channel-forming and calcium-conducting subunit of the mitochondrial inner membrane calcium uniporter complex (uniplex), which mediates calcium uptake into the mitochondrial matrix. MCU channel activity is regulated by the calcium-sensor subunits of the uniplex MICU1 and MICU2 (or MICU3). Mitochondrial calcium homeostasis plays key roles in cellular physiology and regulates ATP production, cytoplasmic calcium signals and activation of cell death pathways. Involved in buffering the amplitude of systolic calcium rises in cardiomyocytes. While dispensable for baseline homeostatic cardiac function, acts as a key regulator of short-term mitochondrial calcium loading underlying a 'fight-or-flight' response during acute stress: acts by mediating a rapid increase of mitochondrial calcium in pacemaker cells. Participates in mitochondrial permeability transition during ischemia-reperfusion injury. Mitochondrial calcium uptake in skeletal muscle cells is involved in muscle size in adults. Regulates synaptic vesicle endocytosis kinetics in central nerve terminal. Regulates glucose-dependent insulin secretion in pancreatic beta-cells by regulating mitochondrial calcium uptake. Involved in antigen processing and presentation. The chain is Calcium uniporter protein, mitochondrial from Homo sapiens (Human).